We begin with the raw amino-acid sequence, 144 residues long: Large ribosomal subunit protein uL15 (144 aa).

The tract at residues 1–54 (MRLNTLSPAAGSKHAPKRVGRGMGSGLGKTAGRGHKGQKSRSGGGVRPGFEGGQ) is disordered. 2 stretches are compositionally biased toward gly residues: residues 21–31 (RGMGSGLGKTA) and 42–52 (SGGGVRPGFEG).

This sequence belongs to the universal ribosomal protein uL15 family. As to quaternary structure, part of the 50S ribosomal subunit.

Its function is as follows. Binds to the 23S rRNA. The chain is Large ribosomal subunit protein uL15 from Shewanella baltica (strain OS223).